Here is a 134-residue protein sequence, read N- to C-terminus: Parvalbumin-like EF-hand-containing protein (134 aa).

2 EF-hand domains span residues 55–90 (QLDD…IPSS) and 96–131 (LTDE…EKIP). Ca(2+) contacts are provided by Asp-68, Asp-70, Ser-72, Phe-74, Glu-76, Glu-79, Asp-109, Asp-113, and Glu-120.

It belongs to the parvalbumin family.

This is Parvalbumin-like EF-hand-containing protein from Homo sapiens (Human).